Reading from the N-terminus, the 204-residue chain is Probable 5-formyltetrahydrofolate cyclo-ligase (204 aa).

Residue 5-9 (KNQLR) participates in ATP binding. Substrate-binding positions include glutamate 57, tryptophan 102, and 140–144 (HGKGY). ATP contacts are provided by residues 139–146 (GHGKGYYD) and aspartate 188.

It belongs to the 5-formyltetrahydrofolate cyclo-ligase family.

It carries out the reaction (6S)-5-formyl-5,6,7,8-tetrahydrofolate + ATP = (6R)-5,10-methenyltetrahydrofolate + ADP + phosphate. The sequence is that of Probable 5-formyltetrahydrofolate cyclo-ligase from Schizosaccharomyces pombe (strain 972 / ATCC 24843) (Fission yeast).